We begin with the raw amino-acid sequence, 740 residues long: Phosphoribosylformylglycinamidine synthase subunit PurL (740 aa).

His-50 is a catalytic residue. Positions 53 and 92 each coordinate ATP. Glu-94 contacts Mg(2+). Residues 95–98 (SHNH) and Arg-117 contribute to the substrate site. Catalysis depends on His-96, which acts as the Proton acceptor. A Mg(2+)-binding site is contributed by Asp-118. Position 241 (Gln-241) interacts with substrate. Residue Asp-269 participates in Mg(2+) binding. 313–315 (ESQ) contacts substrate. 2 residues coordinate ATP: Asp-495 and Gly-532. Asn-533 provides a ligand contact to Mg(2+). Ser-535 lines the substrate pocket.

Belongs to the FGAMS family. In terms of assembly, monomer. Part of the FGAM synthase complex composed of 1 PurL, 1 PurQ and 2 PurS subunits.

The protein localises to the cytoplasm. It catalyses the reaction N(2)-formyl-N(1)-(5-phospho-beta-D-ribosyl)glycinamide + L-glutamine + ATP + H2O = 2-formamido-N(1)-(5-O-phospho-beta-D-ribosyl)acetamidine + L-glutamate + ADP + phosphate + H(+). Its pathway is purine metabolism; IMP biosynthesis via de novo pathway; 5-amino-1-(5-phospho-D-ribosyl)imidazole from N(2)-formyl-N(1)-(5-phospho-D-ribosyl)glycinamide: step 1/2. In terms of biological role, part of the phosphoribosylformylglycinamidine synthase complex involved in the purines biosynthetic pathway. Catalyzes the ATP-dependent conversion of formylglycinamide ribonucleotide (FGAR) and glutamine to yield formylglycinamidine ribonucleotide (FGAM) and glutamate. The FGAM synthase complex is composed of three subunits. PurQ produces an ammonia molecule by converting glutamine to glutamate. PurL transfers the ammonia molecule to FGAR to form FGAM in an ATP-dependent manner. PurS interacts with PurQ and PurL and is thought to assist in the transfer of the ammonia molecule from PurQ to PurL. The sequence is that of Phosphoribosylformylglycinamidine synthase subunit PurL from Brucella abortus (strain S19).